Here is a 475-residue protein sequence, read N- to C-terminus: Ankyrin repeat, SAM and basic leucine zipper domain-containing protein 1 (475 aa).

Residues 1-10 are compositionally biased toward low complexity; the sequence is MAAGALRGLA. The disordered stretch occupies residues 1–23; that stretch reads MAAGALRGLAVAGGGESSESEDD. Ser-17, Ser-18, and Ser-20 each carry phosphoserine. 6 ANK repeats span residues 45 to 74, 78 to 107, 110 to 144, 148 to 177, 181 to 210, and 214 to 243; these read EKNE…SVDS, YGWT…NASF, DKQT…DPNV, RLMT…EVNT, NGYT…NKML, and DGKI…PLEG. The 63-residue stretch at 272–334 folds into the SAM domain; the sequence is SYTAFGDLEI…KILSALKELE (63 aa).

Interacts with DDX4, PIWIL1, RANBP9 and TDRD1.

It is found in the cytoplasm. Plays a central role during spermatogenesis by repressing transposable elements and preventing their mobilization, which is essential for the germline integrity. Acts via the piRNA metabolic process, which mediates the repression of transposable elements during meiosis by forming complexes composed of piRNAs and Piwi proteins and governs the methylation and subsequent repression of transposons. Its association with pi-bodies suggests a participation in the primary piRNAs metabolic process. Required prior to the pachytene stage to facilitate the production of multiple types of piRNAs, including those associated with repeats involved in the regulation of retrotransposons. May act by mediating protein-protein interactions during germ cell maturation. The polypeptide is Ankyrin repeat, SAM and basic leucine zipper domain-containing protein 1 (ASZ1) (Otolemur garnettii (Small-eared galago)).